Here is a 286-residue protein sequence, read N- to C-terminus: MLGRAQRTLKRKVCYSGVGVHFGKAAMLTLEPAEENTGVVFSHHAASEQYIPARLANVCGTGRSTTLSLDGSVISTVEHLLASLYSFGVDNVRIYCSEDEIPIGDGSAQVFMDLIDQAGIQEQEQTVQIARLAHPVYYQYQDTILAAFPSDEFKISYTLHYSHNSTIGTQYRSLVISEESFRKEIAPCRTFALYSELCFLMEKGLIGGGCVGNAVLFKDDGVISLGKLRFPDEPVRHKILDLIGDLSLVGTPFLAHVIAVGSGHSSNIALGNRILEALQHEQELVK.

Residues His79, His237, and Asp241 each coordinate Zn(2+). His264 acts as the Proton donor in catalysis.

It belongs to the LpxC family. Zn(2+) is required as a cofactor.

The enzyme catalyses a UDP-3-O-[(3R)-3-hydroxyacyl]-N-acetyl-alpha-D-glucosamine + H2O = a UDP-3-O-[(3R)-3-hydroxyacyl]-alpha-D-glucosamine + acetate. It functions in the pathway glycolipid biosynthesis; lipid IV(A) biosynthesis; lipid IV(A) from (3R)-3-hydroxytetradecanoyl-[acyl-carrier-protein] and UDP-N-acetyl-alpha-D-glucosamine: step 2/6. Catalyzes the hydrolysis of UDP-3-O-myristoyl-N-acetylglucosamine to form UDP-3-O-myristoylglucosamine and acetate, the committed step in lipid A biosynthesis. This Chlamydia trachomatis serovar A (strain ATCC VR-571B / DSM 19440 / HAR-13) protein is UDP-3-O-acyl-N-acetylglucosamine deacetylase.